Consider the following 240-residue polypeptide: Tetrahydromethanopterin S-methyltransferase subunit A (240 aa).

Residues 1-218 (MVDKKEPASG…KFHSGVHAGK (218 aa)) lie on the Cytoplasmic side of the membrane. Histidine 85 is a binding site for 5-hydroxybenzimidazolylcob(I)amide. Residues 219–239 (IEGAMIGLTVTISLLGLLLLG) traverse the membrane as a helical segment. A topological domain (extracellular) is located at residue arginine 240.

This sequence belongs to the MtrA family. As to quaternary structure, the complex is composed of 8 subunits; MtrA, MtrB, MtrC, MtrD, MtrE, MtrF, MtrG and MtrH. It depends on 5-hydroxybenzimidazolylcob(I)amide as a cofactor.

The protein resides in the cell membrane. It catalyses the reaction 5-methyl-5,6,7,8-tetrahydromethanopterin + coenzyme M + 2 Na(+)(in) = 5,6,7,8-tetrahydromethanopterin + methyl-coenzyme M + 2 Na(+)(out). The protein operates within one-carbon metabolism; methanogenesis from CO(2); methyl-coenzyme M from 5,10-methylene-5,6,7,8-tetrahydromethanopterin: step 2/2. Its function is as follows. Part of a complex that catalyzes the formation of methyl-coenzyme M and tetrahydromethanopterin from coenzyme M and methyl-tetrahydromethanopterin. This is an energy-conserving, sodium-ion translocating step. The protein is Tetrahydromethanopterin S-methyltransferase subunit A of Methanosarcina acetivorans (strain ATCC 35395 / DSM 2834 / JCM 12185 / C2A).